We begin with the raw amino-acid sequence, 243 residues long: Phosphoribosyl isomerase A (243 aa).

D9 serves as the catalytic Proton acceptor. D128 acts as the Proton donor in catalysis.

It belongs to the HisA/HisF family.

The protein resides in the cytoplasm. The catalysed reaction is 1-(5-phospho-beta-D-ribosyl)-5-[(5-phospho-beta-D-ribosylamino)methylideneamino]imidazole-4-carboxamide = 5-[(5-phospho-1-deoxy-D-ribulos-1-ylimino)methylamino]-1-(5-phospho-beta-D-ribosyl)imidazole-4-carboxamide. It carries out the reaction N-(5-phospho-beta-D-ribosyl)anthranilate = 1-(2-carboxyphenylamino)-1-deoxy-D-ribulose 5-phosphate. The protein operates within amino-acid biosynthesis; L-histidine biosynthesis; L-histidine from 5-phospho-alpha-D-ribose 1-diphosphate: step 4/9. It functions in the pathway amino-acid biosynthesis; L-tryptophan biosynthesis; L-tryptophan from chorismate: step 3/5. Its function is as follows. Involved in both the histidine and tryptophan biosynthetic pathways. The protein is Phosphoribosyl isomerase A of Mycolicibacterium paratuberculosis (strain ATCC BAA-968 / K-10) (Mycobacterium paratuberculosis).